The following is a 395-amino-acid chain: Acetylornithine aminotransferase (395 aa).

Pyridoxal 5'-phosphate-binding positions include 117-118 (GA) and phenylalanine 144. Arginine 147 is a binding site for N(2)-acetyl-L-ornithine. 230–233 (DEVQ) lines the pyridoxal 5'-phosphate pocket. Position 259 is an N6-(pyridoxal phosphate)lysine (lysine 259). Serine 285 contacts N(2)-acetyl-L-ornithine. A pyridoxal 5'-phosphate-binding site is contributed by threonine 286.

This sequence belongs to the class-III pyridoxal-phosphate-dependent aminotransferase family. ArgD subfamily. As to quaternary structure, homodimer. The cofactor is pyridoxal 5'-phosphate.

The protein resides in the cytoplasm. It carries out the reaction N(2)-acetyl-L-ornithine + 2-oxoglutarate = N-acetyl-L-glutamate 5-semialdehyde + L-glutamate. The protein operates within amino-acid biosynthesis; L-arginine biosynthesis; N(2)-acetyl-L-ornithine from L-glutamate: step 4/4. The sequence is that of Acetylornithine aminotransferase from Methanosarcina acetivorans (strain ATCC 35395 / DSM 2834 / JCM 12185 / C2A).